The chain runs to 311 residues: Glycine--tRNA ligase alpha subunit (311 aa).

Belongs to the class-II aminoacyl-tRNA synthetase family. In terms of assembly, tetramer of two alpha and two beta subunits.

It is found in the cytoplasm. The enzyme catalyses tRNA(Gly) + glycine + ATP = glycyl-tRNA(Gly) + AMP + diphosphate. The sequence is that of Glycine--tRNA ligase alpha subunit from Rhizobium meliloti (strain 1021) (Ensifer meliloti).